Reading from the N-terminus, the 176-residue chain is MDLPGPIHEILMLFGGFVLLLGGLGVVLLTNPIYSAFSLGLVLVCISLFYFLLNSYFVAVAQLLIYVGAINVLIIFAVMFVNGSEWSKDKNYWTIGDGFTSLVCITIVFSLMTTIPDTSWYGILWTTRSNQIVEQGLINNVQQIGIHLATDFYLPFELISIILLVSLIGAITMARQ.

The next 5 helical transmembrane spans lie at 10–30 (ILML…VLLT), 33–53 (IYSA…YFLL), 60–80 (VAQL…AVMF), 95–115 (IGDG…MTTI), and 152–172 (FYLP…GAIT).

The protein belongs to the complex I subunit 6 family. In terms of assembly, NDH is composed of at least 16 different subunits, 5 of which are encoded in the nucleus.

Its subcellular location is the plastid. It is found in the chloroplast thylakoid membrane. It carries out the reaction a plastoquinone + NADH + (n+1) H(+)(in) = a plastoquinol + NAD(+) + n H(+)(out). The enzyme catalyses a plastoquinone + NADPH + (n+1) H(+)(in) = a plastoquinol + NADP(+) + n H(+)(out). Functionally, NDH shuttles electrons from NAD(P)H:plastoquinone, via FMN and iron-sulfur (Fe-S) centers, to quinones in the photosynthetic chain and possibly in a chloroplast respiratory chain. The immediate electron acceptor for the enzyme in this species is believed to be plastoquinone. Couples the redox reaction to proton translocation, and thus conserves the redox energy in a proton gradient. The chain is NAD(P)H-quinone oxidoreductase subunit 6, chloroplastic (ndhG) from Triticum aestivum (Wheat).